The chain runs to 375 residues: MENFPTEYFLNTSVRLLEYIRYRDSNYTREERIENLHYAYNKAAHHFAQPRQQQMLKVDPKRLQASLQTIVGMVVYSWAKVSKECMADLSIHYTYTLVLDDSSDDPHPAMLNYFDDLQAGREQAHPWWALVNEHFPNVLRHFGPFCSLNLIRSTMDFFEGCWIEQYNFGGFPGSDDYPQFLRRMNGLGHCVGASLWPKDLFDERKHFLEITSAVAQMENWMVWVNDLMSFYKEFDDERDQISLVKNFVTCHEITLDEALEKLTQETLHSSKQMVAVFSDKDPQVMDTIECFMHGYVTWHLCDARYRLHEIYEKVKDQDTEDAKKFCKFFEQAANVGAVAPSEWAYPQVAQLANVRAKDDVKEAQKPILSSIELVE.

Belongs to the trichodiene synthase family.

The catalysed reaction is (2E,6E)-farnesyl diphosphate = trichodiene + diphosphate. It participates in sesquiterpene biosynthesis; trichothecene biosynthesis. TS is a member of the terpene cyclase group of enzymes. It catalyzes the isomerization and cyclization of farnesyl pyro-phosphate to form trichodiene, the first cyclic intermediate in the biosynthetic pathway for trichothecenes. It serves to branch trichothecene biosynthesis from the isoprenoid pathway. This chain is Trichodiene synthase (TRI5), found in Gibberella zeae (strain ATCC MYA-4620 / CBS 123657 / FGSC 9075 / NRRL 31084 / PH-1) (Wheat head blight fungus).